Reading from the N-terminus, the 69-residue chain is Toxin CSTX-11 (69 aa).

Intrachain disulfides connect Cys-6–Cys-21, Cys-13–Cys-30, Cys-20–Cys-47, and Cys-32–Cys-45.

As to expression, expressed by the venom gland.

The protein resides in the secreted. It localises to the target cell membrane. Its function is as follows. Spider venom toxin that shows calcium channel blocking activity and exhibits cytolytic activity by affecting the outer leaflet curvature and/or pore formation across the membrane. It blocks L-type calcium channels (Cav1/CACNA1) in mammalian neurons at nanomolar concentrations. Furthermore, it produces a slow voltage-independent block of mid/low and high voltage-activated calcium channels in cockroach neurons. Potassium ions, histamine, M-ctenitoxin-Cs1a (AC P83619), CSTX-9 (AC P58604), and CSTX-13 (AC P83919) synergistically increase the insecticidal activity of this toxin. In vivo, it causes paralysis in blow flies and provokes death in drosophila. The chain is Toxin CSTX-11 from Cupiennius salei (American wandering spider).